The primary structure comprises 249 residues: Aspartate/glutamate leucyltransferase (249 aa).

This sequence belongs to the R-transferase family. Bpt subfamily.

It is found in the cytoplasm. The catalysed reaction is N-terminal L-glutamyl-[protein] + L-leucyl-tRNA(Leu) = N-terminal L-leucyl-L-glutamyl-[protein] + tRNA(Leu) + H(+). It carries out the reaction N-terminal L-aspartyl-[protein] + L-leucyl-tRNA(Leu) = N-terminal L-leucyl-L-aspartyl-[protein] + tRNA(Leu) + H(+). Its function is as follows. Functions in the N-end rule pathway of protein degradation where it conjugates Leu from its aminoacyl-tRNA to the N-termini of proteins containing an N-terminal aspartate or glutamate. The protein is Aspartate/glutamate leucyltransferase of Brucella abortus (strain S19).